A 292-amino-acid polypeptide reads, in one-letter code: S-adenosyl-L-methionine-dependent Diels-Alderase iccD (292 aa).

The helical transmembrane segment at 240-262 (LPVVRMFYVVLLVPYLFVRLLGI) threads the bilayer.

Belongs to the class I-like SAM-binding methyltransferase superfamily. Erg6/SMT family. The cofactor is S-adenosyl-L-methionine.

It is found in the membrane. It carries out the reaction 3-[(2E,4E,8S,10E,12Z)-4,8-dimethyltetradeca-2,4,10,12-tetraenoyl]-4-hydroxy-5-(4-hydroxyphenyl)-1,2-dihydropyridin-2-one = 8-epi-ilicicolin H. It participates in mycotoxin biosynthesis. In terms of biological role, S-adenosyl-l-methionine-dependent Diels-Alderase; part of the gene cluster that mediates the biosynthesis of ilicicolin H, a 4-hydroxy-2-pyridonealkaloid that has potent and broad antifungal activities by inhibiting the mitochondrial respiration chain. IccD catalyzes the Diels-Alder reaction that converts the acyclic 2-pyridone intermediate to 8-epi-ilicicolin H. The biosynthesis of ilicicolin H starts with formation of the tetramic acid by the hybrid PKS-NRPS synthetase iccA with the partnering trans-enoyl reductase iccB since iccA lacks a designated enoylreductase (ER) domain. The cytochrome P450 monooxygenase iccC then catalyzes the ring expansion of the tetramate to the acyclic 2-pyridone. The pericyclase iccD further converts the acyclic 2-pyridone into 8-epi-ilicicolin H. Finally, the epimerase iccE converts 8-epi-ilicicolin H into ilicicolin H via epimerization. IccA to iccE are sufficient for ilicicolin H biosynthesis and the roles of the remaining enzymes, iccF, iccG and iccH within the pathway have still to be determined. This is S-adenosyl-L-methionine-dependent Diels-Alderase iccD from Talaromyces variabilis (Penicillium variabile).